The chain runs to 354 residues: C-C chemokine receptor type 5 (354 aa).

The Extracellular segment spans residues 1-32; the sequence is MDFQGSIPTYIYDIDYSMSAPCQKVNVKQIAA. An O-linked (GalNAc...) serine glycan is attached at S6. Sulfotyrosine is present on residues Y10 and Y16. 2 disulfide bridges follow: C22–C271 and C103–C180. Residues 33–60 traverse the membrane as a helical segment; that stretch reads QLLPPLYSLVFIFGFVGNMMVFLILISC. The Cytoplasmic segment spans residues 61–70; sequence KKLKSMTDIY. Residues 71 to 91 form a helical membrane-spanning segment; sequence LFNLAISDLLFLLTLPFWAHY. At 92-104 the chain is on the extracellular side; the sequence is AANEWVFGNIMCK. A helical transmembrane segment spans residues 105–126; the sequence is LFTGIYHIGYFGGIFFIILLTI. Over 127 to 143 the chain is Cytoplasmic; the sequence is DRYLAIVHAVFAIKART. The helical transmembrane segment at 144–168 threads the bilayer; the sequence is VNFGVITSVVTWVVAVFVSLPEIIF. The Extracellular segment spans residues 169-200; that stretch reads MRSQKEGSHYTCSPHFLHIQYRFWKHFQTLKM. A helical transmembrane segment spans residues 201–220; sequence VILSLILPLLVMVICYSGIL. At 221–237 the chain is on the cytoplasmic side; the sequence is NTLFRCRNEKKRHRAVR. Residues 238–262 traverse the membrane as a helical segment; it reads LIFAIMIVYFLFWTPYNIVLLLTTF. The Extracellular segment spans residues 263-279; sequence QEYFGLNNCSSSNRLDQ. A helical membrane pass occupies residues 280 to 303; that stretch reads AMQVTETLGMTHCCLNPVIYAFVG. Residues 304-354 lie on the Cytoplasmic side of the membrane; that stretch reads EKFRNYLSVFFRKHIVKRFCKHCSIFQQVNPDRVSSVYTRSTGEQEVSTGL. 2 S-palmitoyl cysteine lipidation sites follow: C323 and C326. 4 positions are modified to phosphoserine; by BARK1: S338, S339, S344, and S351.

It belongs to the G-protein coupled receptor 1 family. Interacts with PRAF2. Efficient ligand binding to CCL3/MIP-1alpha and CCL4/MIP-1beta requires sulfation, O-glycosylation and sialic acid modifications. Glycosylation on Ser-6 is required for efficient binding of CCL4. Interacts with GRK2. Interacts with ARRB1 and ARRB2. Interacts with CNIH4. Interacts with S100A4; this interaction stimulates T-lymphocyte chemotaxis. Post-translationally, sulfated on at least 2 of the N-terminal tyrosines. Sulfation is required for efficient binding of the chemokines, CCL3 and CCL4. In terms of processing, O-glycosylated, but not N-glycosylated. Ser-6 appears to be the major site. Also sialylated glycans present which contribute to chemokine binding. Ser-17 may also be glycosylated and, if so, with small moieties such as a T-antigen. Palmitoylation in the C-terminal is important for cell surface expression. Post-translationally, phosphorylation on serine residues in the C-terminal is stimulated by binding CC chemokines especially by APO-RANTES.

It localises to the cell membrane. Its function is as follows. Receptor for a number of inflammatory CC-chemokines including CCL3/MIP-1-alpha, CCL4/MIP-1-beta and RANTES and subsequently transduces a signal by increasing the intracellular calcium ion level. May play a role in the control of granulocytic lineage proliferation or differentiation. Participates in T-lymphocyte migration to the infection site by acting as a chemotactic receptor. In Rattus norvegicus (Rat), this protein is C-C chemokine receptor type 5 (Ccr5).